The chain runs to 337 residues: tRNA N6-adenosine threonylcarbamoyltransferase (337 aa).

Residues histidine 111 and histidine 115 each coordinate Fe cation. Residues 134 to 138, aspartate 167, glycine 180, and asparagine 272 each bind substrate; that span reads LVSGG. Aspartate 300 lines the Fe cation pocket.

The protein belongs to the KAE1 / TsaD family. Fe(2+) serves as cofactor.

Its subcellular location is the cytoplasm. It catalyses the reaction L-threonylcarbamoyladenylate + adenosine(37) in tRNA = N(6)-L-threonylcarbamoyladenosine(37) in tRNA + AMP + H(+). Functionally, required for the formation of a threonylcarbamoyl group on adenosine at position 37 (t(6)A37) in tRNAs that read codons beginning with adenine. Is involved in the transfer of the threonylcarbamoyl moiety of threonylcarbamoyl-AMP (TC-AMP) to the N6 group of A37, together with TsaE and TsaB. TsaD likely plays a direct catalytic role in this reaction. In Cronobacter sakazakii (strain ATCC BAA-894) (Enterobacter sakazakii), this protein is tRNA N6-adenosine threonylcarbamoyltransferase.